Consider the following 147-residue polypeptide: Anti-sigma F factor (147 aa).

It belongs to the anti-sigma-factor family.

It carries out the reaction L-seryl-[protein] + ATP = O-phospho-L-seryl-[protein] + ADP + H(+). The enzyme catalyses L-threonyl-[protein] + ATP = O-phospho-L-threonyl-[protein] + ADP + H(+). Functionally, binds to sigma F and blocks its ability to form an RNA polymerase holoenzyme (E-sigma F). Phosphorylates SpoIIAA on a serine residue. This phosphorylation may enable SpoIIAA to act as an anti-anti-sigma factor that counteracts SpoIIAB and thus releases sigma F from inhibition. The chain is Anti-sigma F factor from Heyndrickxia coagulans (Weizmannia coagulans).